Here is a 173-residue protein sequence, read N- to C-terminus: Translation initiation factor IF-3 (173 aa).

Belongs to the IF-3 family. In terms of assembly, monomer.

It localises to the cytoplasm. Functionally, IF-3 binds to the 30S ribosomal subunit and shifts the equilibrium between 70S ribosomes and their 50S and 30S subunits in favor of the free subunits, thus enhancing the availability of 30S subunits on which protein synthesis initiation begins. The chain is Translation initiation factor IF-3 from Bacillus subtilis (strain 168).